A 45-amino-acid polypeptide reads, in one-letter code: Large ribosomal subunit protein bL34 (45 aa).

Basic and acidic residues predominate over residues 1–10 (MTKRTLEGTN). Residues 1 to 27 (MTKRTLEGTNRKRKRTSGFRARMRSAT) are disordered. Basic residues predominate over residues 11 to 23 (RKRKRTSGFRARM).

The protein belongs to the bacterial ribosomal protein bL34 family.

This Synechococcus elongatus (strain ATCC 33912 / PCC 7942 / FACHB-805) (Anacystis nidulans R2) protein is Large ribosomal subunit protein bL34.